An 804-amino-acid chain; its full sequence is Probable phosphoketolase (804 aa).

This sequence belongs to the XFP family. The cofactor is thiamine diphosphate.

In Mycobacterium avium (strain 104), this protein is Probable phosphoketolase.